The sequence spans 169 residues: UPF0303 protein BOV_1367 (169 aa).

This sequence belongs to the UPF0303 family.

This Brucella ovis (strain ATCC 25840 / 63/290 / NCTC 10512) protein is UPF0303 protein BOV_1367.